The primary structure comprises 558 residues: Dihydroxy-acid dehydratase (558 aa).

A [2Fe-2S] cluster-binding site is contributed by Cys54. Asp86 serves as a coordination point for Mg(2+). Position 127 (Cys127) interacts with [2Fe-2S] cluster. Positions 128 and 129 each coordinate Mg(2+). N6-carboxylysine is present on Lys129. A [2Fe-2S] cluster-binding site is contributed by Cys199. Glu448 contributes to the Mg(2+) binding site. Catalysis depends on Ser474, which acts as the Proton acceptor.

It belongs to the IlvD/Edd family. As to quaternary structure, homodimer. Requires [2Fe-2S] cluster as cofactor. Mg(2+) is required as a cofactor.

It carries out the reaction (2R)-2,3-dihydroxy-3-methylbutanoate = 3-methyl-2-oxobutanoate + H2O. It catalyses the reaction (2R,3R)-2,3-dihydroxy-3-methylpentanoate = (S)-3-methyl-2-oxopentanoate + H2O. Its pathway is amino-acid biosynthesis; L-isoleucine biosynthesis; L-isoleucine from 2-oxobutanoate: step 3/4. It functions in the pathway amino-acid biosynthesis; L-valine biosynthesis; L-valine from pyruvate: step 3/4. Functionally, functions in the biosynthesis of branched-chain amino acids. Catalyzes the dehydration of (2R,3R)-2,3-dihydroxy-3-methylpentanoate (2,3-dihydroxy-3-methylvalerate) into 2-oxo-3-methylpentanoate (2-oxo-3-methylvalerate) and of (2R)-2,3-dihydroxy-3-methylbutanoate (2,3-dihydroxyisovalerate) into 2-oxo-3-methylbutanoate (2-oxoisovalerate), the penultimate precursor to L-isoleucine and L-valine, respectively. This Acidothermus cellulolyticus (strain ATCC 43068 / DSM 8971 / 11B) protein is Dihydroxy-acid dehydratase.